The chain runs to 175 residues: Peptide deformylase (175 aa).

Residues Cys-98 and His-140 each contribute to the Fe cation site. Residue Glu-141 is part of the active site. His-144 provides a ligand contact to Fe cation.

This sequence belongs to the polypeptide deformylase family. Fe(2+) is required as a cofactor.

It catalyses the reaction N-terminal N-formyl-L-methionyl-[peptide] + H2O = N-terminal L-methionyl-[peptide] + formate. Functionally, removes the formyl group from the N-terminal Met of newly synthesized proteins. Requires at least a dipeptide for an efficient rate of reaction. N-terminal L-methionine is a prerequisite for activity but the enzyme has broad specificity at other positions. The chain is Peptide deformylase from Nitrobacter hamburgensis (strain DSM 10229 / NCIMB 13809 / X14).